A 227-amino-acid chain; its full sequence is Mitochondrial inner membrane protease ATP23 (227 aa).

His-124 provides a ligand contact to a divalent metal cation. The active site involves Glu-125. Residue His-128 coordinates a divalent metal cation.

This sequence belongs to the peptidase M76 family. Interacts with ATP6.

Its subcellular location is the mitochondrion inner membrane. Its function is as follows. Has a dual role in the assembly of mitochondrial ATPase. Acts as a protease that removes the N-terminal 10 residues of mitochondrial ATPase CF(0) subunit 6 (ATP6) at the intermembrane space side. Also involved in the correct assembly of the membrane-embedded ATPase CF(0) particle, probably mediating association of ATP6 with the subunit 9 ring. In Saccharomyces cerevisiae (strain Lalvin EC1118 / Prise de mousse) (Baker's yeast), this protein is Mitochondrial inner membrane protease ATP23 (ATP23).